A 410-amino-acid polypeptide reads, in one-letter code: Cysteine desulfurase IscS (410 aa).

Residues 80 to 81 (AT), Asn-160, Gln-188, and 208 to 210 (SGH) contribute to the pyridoxal 5'-phosphate site. An N6-(pyridoxal phosphate)lysine modification is found at Lys-211. Thr-248 is a binding site for pyridoxal 5'-phosphate. Cys-334 serves as the catalytic Cysteine persulfide intermediate. Residue Cys-334 participates in [2Fe-2S] cluster binding.

Belongs to the class-V pyridoxal-phosphate-dependent aminotransferase family. NifS/IscS subfamily. As to quaternary structure, homodimer. Forms a heterotetramer with IscU, interacts with other sulfur acceptors. Requires pyridoxal 5'-phosphate as cofactor.

It is found in the cytoplasm. The catalysed reaction is (sulfur carrier)-H + L-cysteine = (sulfur carrier)-SH + L-alanine. It participates in cofactor biosynthesis; iron-sulfur cluster biosynthesis. Functionally, master enzyme that delivers sulfur to a number of partners involved in Fe-S cluster assembly, tRNA modification or cofactor biosynthesis. Catalyzes the removal of elemental sulfur atoms from cysteine to produce alanine. Functions as a sulfur delivery protein for Fe-S cluster synthesis onto IscU, an Fe-S scaffold assembly protein, as well as other S acceptor proteins. In Rickettsia africae (strain ESF-5), this protein is Cysteine desulfurase IscS.